Here is a 151-residue protein sequence, read N- to C-terminus: C-C motif chemokine 25 (151 aa).

The first 22 residues, 1–22 (MNLWLLVCLVASLMGAWSTVHT), serve as a signal peptide directing secretion. 2 disulfides stabilise this stretch: Cys29-Cys57 and Cys30-Cys73. The segment at 94–151 (THSKQHLGSRRNLQDSHLGGQRSNTGMSRLAHSKSKSSRSTRSNKKKTSFLNMANPGP) is disordered. Residues 124–141 (AHSKSKSSRSTRSNKKKT) are compositionally biased toward basic residues.

It belongs to the intercrine beta (chemokine CC) family.

It is found in the secreted. Potentially involved in T-cell development. Recombinant protein shows chemotactic activity on thymocytes, macrophages, THP-1 cells, and dendritics cells but is inactive on peripheral blood lymphocytes and neutrophils. Binds to CCR9. Binds to atypical chemokine receptor ACKR4 and mediates the recruitment of beta-arrestin (ARRB1/2) to ACKR4. This is C-C motif chemokine 25 (CCL25) from Canis lupus familiaris (Dog).